The following is a 64-amino-acid chain: UPF0434 protein Oant_3286 (64 aa).

The protein belongs to the UPF0434 family.

The chain is UPF0434 protein Oant_3286 from Brucella anthropi (strain ATCC 49188 / DSM 6882 / CCUG 24695 / JCM 21032 / LMG 3331 / NBRC 15819 / NCTC 12168 / Alc 37) (Ochrobactrum anthropi).